Reading from the N-terminus, the 817-residue chain is Collagen-like protein 4 (817 aa).

Collagen-like domains lie at 83–142, 145–264, and 268–327; these read GDTG…KGQD, GSKG…KGDD, and GIQG…KGLK. Disordered regions lie at residues 87 to 107, 120 to 458, and 479 to 543; these read NKGE…GDNG, FNGS…DKGD, and IIGD…KGDI. Asn-106 and Asn-121 each carry an N-linked (GlcNAc...) asparagine; by host glycan. Basic and acidic residues-rich tracts occupy residues 126–141 and 149–161; these read IKGD…DKGQ and QKGE…DDGI. The N-linked (GlcNAc...) asparagine; by host glycan is linked to Asn-183. Basic and acidic residues-rich tracts occupy residues 212–224 and 233–245; these read IKGD…EDGI and SKGE…DDGT. Residues 246–260 are compositionally biased toward low complexity; it reads KGITGLKGTKGNSGS. The segment covering 294 to 341 has biased composition (basic and acidic residues); sequence KGSDGDKGNKGLDGIKGDLGDDGIKGDKGIKGLKGDTGNSDKGDKGSK. N-linked (GlcNAc...) asparagine; by host glycosylation is found at Asn-345 and Asn-360. Collagen-like domains lie at 352 to 411 and 430 to 489; these read GDKG…KGLV and GDKG…KGIK. Composition is skewed to basic and acidic residues over residues 354–368, 377–390, and 428–458; these read KGSK…ESGD, SKGD…KGDL, and SKGD…DKGD. Over residues 480–494 the composition is skewed to low complexity; the sequence is IGDNGSKGIKGSSNN. A glycan (N-linked (GlcNAc...) asparagine; by host) is linked at Asn-483. 3 stretches are compositionally biased toward basic and acidic residues: residues 495–504, 515–525, and 533–543; these read KGDKGDKGNT, IKGDKGIKGSK, and EKGEKGTKGDI. One can recognise a Collagen-like 6 domain in the interval 512-570; sequence TKGIKGDKGIKGSKGDLGSVGEKGEKGTKGDIGTKGETGLKGIIGDKGELGSKGIKGLS. N-linked (GlcNAc...) asparagine; by host glycosylation is found at Asn-709, Asn-712, and Asn-715. Residues 757–771 show a composition bias toward gly residues; that stretch reads GGGGASAFGNGGRGG. The tract at residues 757–804 is disordered; sequence GGGGASAFGNGGRGGNTTQAATKGEYGSGGGGGSEFSPSGSTNGGDGG. Asn-772 carries N-linked (GlcNAc...) asparagine; by host glycosylation.

Post-translationally, may be hydroxylated on lysine by the viral-encoded procollagen-lysine,2-oxoglutarate 5-dioxygenase.

It is found in the virion. In terms of biological role, may participate in the formation of a layer of cross-linked glycosylated fibrils at the viral surface thus giving it a hairy-like appearance. The sequence is that of Collagen-like protein 4 from Acanthamoeba polyphaga (Amoeba).